Reading from the N-terminus, the 465-residue chain is UDP-N-acetylmuramate--L-alanine ligase (465 aa).

Glycine 112–threonine 118 lines the ATP pocket.

The protein belongs to the MurCDEF family.

The protein resides in the cytoplasm. It catalyses the reaction UDP-N-acetyl-alpha-D-muramate + L-alanine + ATP = UDP-N-acetyl-alpha-D-muramoyl-L-alanine + ADP + phosphate + H(+). The protein operates within cell wall biogenesis; peptidoglycan biosynthesis. Functionally, cell wall formation. In Burkholderia lata (strain ATCC 17760 / DSM 23089 / LMG 22485 / NCIMB 9086 / R18194 / 383), this protein is UDP-N-acetylmuramate--L-alanine ligase.